Consider the following 208-residue polypeptide: Large ribosomal subunit protein uL3 (208 aa).

Gln-149 carries the post-translational modification N5-methylglutamine.

Belongs to the universal ribosomal protein uL3 family. As to quaternary structure, part of the 50S ribosomal subunit. Forms a cluster with proteins L14 and L19. In terms of processing, methylated by PrmB.

Functionally, one of the primary rRNA binding proteins, it binds directly near the 3'-end of the 23S rRNA, where it nucleates assembly of the 50S subunit. The polypeptide is Large ribosomal subunit protein uL3 (Actinobacillus pleuropneumoniae serotype 5b (strain L20)).